The primary structure comprises 108 residues: Parvalbumin beta 2 (108 aa).

A1 carries the post-translational modification N-acetylalanine. EF-hand domains are found at residues K38–G73 and L77–G108. The Ca(2+) site is built by D51, D53, S55, F57, E59, E62, D90, D92, D94, K96, and E101.

This sequence belongs to the parvalbumin family.

In terms of biological role, in muscle, parvalbumin is thought to be involved in relaxation after contraction. It binds two calcium ions. The chain is Parvalbumin beta 2 from Merluccius bilinearis (Silver hake).